Reading from the N-terminus, the 470-residue chain is Metalloreductase STEAP4 (470 aa).

NADP(+)-binding positions include 27–30 (TGDF), 49–50 (SR), Y67, 81–85 (MHREH), N106, and A139. The FAD site is built by W140 and D148. R171 contacts NADP(+). 2 helical membrane-spanning segments follow: residues 202 to 224 (FPFY…REVI) and 236 to 256 (YRLA…ILLA). Residue Y217 participates in Fe(3+) binding. Residues 247 to 395 (FPITALILLA…LGYLTLVLCT (149 aa)) form the Ferric oxidoreductase domain. FAD is bound by residues Q269 and R290. A run of 2 helical transmembrane segments spans residues 293 to 313 (LGLV…VIPI) and 342 to 362 (AWIN…FLLL). Heme b is bound at residue H304. Residue Y307 coordinates Fe(3+). The FAD site is built by S366 and Q383. 2 consecutive transmembrane segments (helical) span residues 381–401 (FVQS…TLVY) and 419–439 (AYIL…ILIM). Heme b is bound at residue H397.

It belongs to the STEAP family. Homotrimer. Interacts with PTK2/FAK1; the interaction may regulate PTK2 phosphorylation. FAD is required as a cofactor. The cofactor is heme b. As to expression, expressed in white and brown adipose tissues cells, as well as in muscle and liver cells. Detected in joints and spleens of arthritic mice.

The protein localises to the cell membrane. The protein resides in the golgi apparatus membrane. Its subcellular location is the early endosome membrane. It carries out the reaction 2 Fe(2+) + NADP(+) + H(+) = 2 Fe(3+) + NADPH. The enzyme catalyses 2 Cu(+) + NADP(+) + H(+) = 2 Cu(2+) + NADPH. Integral membrane protein that functions as a NADPH-dependent ferric-chelate reductase, using NADPH from one side of the membrane to reduce a Fe(3+) chelate that is bound on the other side of the membrane. Mediates sequential transmembrane electron transfer from NADPH to FAD and onto heme, and finally to the Fe(3+) chelate. Can also reduce Cu(2+) to Cu(1+). Plays a role in systemic metabolic homeostasis, integrating inflammatory and metabolic responses. Associated with obesity and insulin-resistance. Involved in inflammatory arthritis, through the regulation of inflammatory cytokines. Inhibits anchorage-independent cell proliferation. The protein is Metalloreductase STEAP4 (Steap4) of Mus musculus (Mouse).